The chain runs to 80 residues: Exodeoxyribonuclease 7 small subunit (80 aa).

The protein belongs to the XseB family. In terms of assembly, heterooligomer composed of large and small subunits.

Its subcellular location is the cytoplasm. The catalysed reaction is Exonucleolytic cleavage in either 5'- to 3'- or 3'- to 5'-direction to yield nucleoside 5'-phosphates.. Bidirectionally degrades single-stranded DNA into large acid-insoluble oligonucleotides, which are then degraded further into small acid-soluble oligonucleotides. This chain is Exodeoxyribonuclease 7 small subunit, found in Pseudomonas aeruginosa (strain LESB58).